Reading from the N-terminus, the 833-residue chain is Neuronal tyrosine-phosphorylated phosphoinositide-3-kinase adapter 1 (833 aa).

Disordered stretches follow at residues 1–45 (MNLL…PGVR), 64–191 (PASQ…LQRL), 219–423 (VFRG…RELP), 645–674 (EEDGARAWNGSTEGPGKVEHEDRGPVPSGI), and 736–765 (HTPRPCSQPRDALSQTHPVLPLPLPPQPAR). Positions 8 to 25 (TKLEWRQHKEEEAKRSSS) are enriched in basic and acidic residues. The interval 76–181 (STMAPRSLSC…DESCAPAPSP (106 aa)) is involved in CYFIP1- and NCKAP1-binding. The segment covering 111 to 120 (PPAKPRRHPS) has biased composition (basic residues). The segment covering 162 to 171 (SPNTQLSVSF) has biased composition (polar residues). A compositionally biased stretch (gly residues) spans 220 to 239 (FRGGGRSGGGLAGPPLGSGG). The span at 248–257 (SDSEDSEAIY) shows a compositional bias: acidic residues. The segment covering 275–285 (GPPPLTAPSPP) has biased composition (pro residues).

The protein belongs to the NYAP family. As to quaternary structure, interacts with ACOT9, ARHGAP26 and PIK3R2. Interacts with components of the WAVE1 complex, CYFIP1 and NCKAP1; this interaction mediates PI3K-WAVE1 association and actin cytoskeleton remodeling. Post-translationally, phosphorylated on tyrosine residues by FYN upon stimulation with CNTN5. Phosphorylation begins at 14 dpc, reaches a peak during perinatal days in brain, then gradually decreases. Expressed predominantly in brain where it is present in the neurons, but not in astrocytes or oligodendrites.

Its function is as follows. Activates PI3K and concomitantly recruits the WAVE1 complex to the close vicinity of PI3K and regulates neuronal morphogenesis. The chain is Neuronal tyrosine-phosphorylated phosphoinositide-3-kinase adapter 1 (Nyap1) from Mus musculus (Mouse).